We begin with the raw amino-acid sequence, 256 residues long: tRNA-cytidine(32) 2-sulfurtransferase 1 (256 aa).

The short motif at 38–43 (SGGKDS) is the PP-loop motif element. Cys113, Cys116, and Cys204 together coordinate [4Fe-4S] cluster.

It belongs to the TtcA family. Homodimer. Requires Mg(2+) as cofactor. The cofactor is [4Fe-4S] cluster.

It is found in the cytoplasm. It carries out the reaction cytidine(32) in tRNA + S-sulfanyl-L-cysteinyl-[cysteine desulfurase] + AH2 + ATP = 2-thiocytidine(32) in tRNA + L-cysteinyl-[cysteine desulfurase] + A + AMP + diphosphate + H(+). Its pathway is tRNA modification. In terms of biological role, catalyzes the ATP-dependent 2-thiolation of cytidine in position 32 of tRNA, to form 2-thiocytidine (s(2)C32). The sulfur atoms are provided by the cysteine/cysteine desulfurase (IscS) system. This Francisella philomiragia subsp. philomiragia (strain ATCC 25017 / CCUG 19701 / FSC 153 / O#319-036) protein is tRNA-cytidine(32) 2-sulfurtransferase 1.